A 901-amino-acid polypeptide reads, in one-letter code: Protein translocase subunit SecA (901 aa).

Residues Gln87, 105–109 (GEGKT), and Asp512 each bind ATP. The interval 868 to 901 (AALAAQTGERKVGRNDPCPCGSGKKYKQCHGRLQ) is disordered. Cys885, Cys887, Cys896, and His897 together coordinate Zn(2+). The segment covering 891-901 (KKYKQCHGRLQ) has biased composition (basic residues).

This sequence belongs to the SecA family. In terms of assembly, monomer and homodimer. Part of the essential Sec protein translocation apparatus which comprises SecA, SecYEG and auxiliary proteins SecDF-YajC and YidC. Requires Zn(2+) as cofactor.

The protein localises to the cell inner membrane. It is found in the cytoplasm. It carries out the reaction ATP + H2O + cellular proteinSide 1 = ADP + phosphate + cellular proteinSide 2.. Its function is as follows. Part of the Sec protein translocase complex. Interacts with the SecYEG preprotein conducting channel. Has a central role in coupling the hydrolysis of ATP to the transfer of proteins into and across the cell membrane, serving both as a receptor for the preprotein-SecB complex and as an ATP-driven molecular motor driving the stepwise translocation of polypeptide chains across the membrane. In Escherichia coli O45:K1 (strain S88 / ExPEC), this protein is Protein translocase subunit SecA.